The following is a 142-amino-acid chain: Large-conductance mechanosensitive channel (142 aa).

3 consecutive transmembrane segments (helical) span residues 14-34 (VMDL…VDSV), 38-58 (LVMP…NYFL), and 82-102 (GNFI…FLLI).

This sequence belongs to the MscL family. In terms of assembly, homopentamer.

It is found in the cell inner membrane. Its function is as follows. Channel that opens in response to stretch forces in the membrane lipid bilayer. May participate in the regulation of osmotic pressure changes within the cell. This is Large-conductance mechanosensitive channel from Rhizobium meliloti (strain 1021) (Ensifer meliloti).